A 110-amino-acid polypeptide reads, in one-letter code: Integration host factor subunit beta (110 aa).

Belongs to the bacterial histone-like protein family. Heterodimer of an alpha and a beta chain.

This protein is one of the two subunits of integration host factor, a specific DNA-binding protein that functions in genetic recombination as well as in transcriptional and translational control. In Parvibaculum lavamentivorans (strain DS-1 / DSM 13023 / NCIMB 13966), this protein is Integration host factor subunit beta.